The following is a 163-amino-acid chain: Putative pre-16S rRNA nuclease (163 aa).

The protein belongs to the YqgF nuclease family.

The protein localises to the cytoplasm. Could be a nuclease involved in processing of the 5'-end of pre-16S rRNA. The chain is Putative pre-16S rRNA nuclease from Nitrobacter winogradskyi (strain ATCC 25391 / DSM 10237 / CIP 104748 / NCIMB 11846 / Nb-255).